A 227-amino-acid chain; its full sequence is 7-cyano-7-deazaguanine synthase (227 aa).

Residue 7-17 (VSGGMDSLVAT) coordinates ATP. Residues Cys187, Cys195, Cys198, and Cys201 each coordinate Zn(2+).

This sequence belongs to the QueC family. Zn(2+) is required as a cofactor.

The enzyme catalyses 7-carboxy-7-deazaguanine + NH4(+) + ATP = 7-cyano-7-deazaguanine + ADP + phosphate + H2O + H(+). Its pathway is purine metabolism; 7-cyano-7-deazaguanine biosynthesis. Its function is as follows. Catalyzes the ATP-dependent conversion of 7-carboxy-7-deazaguanine (CDG) to 7-cyano-7-deazaguanine (preQ(0)). This is 7-cyano-7-deazaguanine synthase from Chlorobaculum tepidum (strain ATCC 49652 / DSM 12025 / NBRC 103806 / TLS) (Chlorobium tepidum).